Here is a 935-residue protein sequence, read N- to C-terminus: MALKSPAFRRKFPLLVTGGLLALQPLATSYVVAAEQFDCQVSAAGGWDCKPKTPVNNLPPRPVHEGAAVSSGTEAAGEAETADRPVLVTEAKGRGLKSRSEDYSHLDWVPREKLTAAQLAETGPYCGGAYIEPTRPGMADTTPKDESPTYINAKVSKYQQEQQVATLAGDVVMRQGSMQAEADEANLYQAENRGELKGNVKIRDNGSLVVGDEAQIQLDTGEAQVDNAEYVMHKSHIRGSALYAKRGENAIIRLKDGTYTTCEPGSNAWQLKGNNITLNPATGFGTATNVTLRVKDFPVFYTPYIYFPIDDRRQSGFLPPSFSTSSDTGFMLVTPYYFNLAPNYDATLYPRYMAKRGLLMEGEFRYLTPSSEGQFGGAYLNDKNDDRKDQTDYKDQRWMVNWQHKGGLDERLMTEVDYTDISDPFYFQDLESDQIGVESRDFLNQQGALTYRGDSYTARLNVHAYEAATISQITPYDRLPQITLNGVLPYQPGGLNFAYETEAARFERDLKNDTVFDKDGNLDLTAGPDGRRLDENIQGIERANGTRLNVAPSISYPMTASYGFLTPKLKYAYTQYDLDLDSKGKADAIALQTANPDAYGSYDSSVSRDVPIFSVDSGLYFDRNTSLFGNNYRQTLEPRMFYLYVPYKDQKDIPLFDTGETLFSYDSLFRDNRFSGTDRIGDENKLSLGVTTRWIEDNGFERQNFSIGQAYYFKDRKVQLPGIDYRTRKDAQSDVSPYALVYNYYFNRDWRFNSDFNWDPDSRSTRSGSAMFHYQPEDNPNKIVNLGYRYRNDTIAYDSTTGTWKVGGGDYGTPGDPNYIKDYYKIQQHDFSVIWPIVPQWNVIARWQHDYNRNRTLEAMGGFEYDNCCWKLRLINRYWIDYDDFSQALPQNEKGDHGVFLQIVLKGLGGVVGNKVESFLDQGIQGYREREDQAY.

The signal sequence occupies residues 1–33; it reads MALKSPAFRRKFPLLVTGGLLALQPLATSYVVA. The tract at residues 52–85 is disordered; it reads KTPVNNLPPRPVHEGAAVSSGTEAAGEAETADRP. The segment covering 65-79 has biased composition (low complexity); the sequence is EGAAVSSGTEAAGEA.

Belongs to the LptD family. In terms of assembly, component of the lipopolysaccharide transport and assembly complex. Interacts with LptE and LptA.

The protein localises to the cell outer membrane. Its function is as follows. Together with LptE, is involved in the assembly of lipopolysaccharide (LPS) at the surface of the outer membrane. The chain is LPS-assembly protein LptD from Pseudomonas putida (strain ATCC 700007 / DSM 6899 / JCM 31910 / BCRC 17059 / LMG 24140 / F1).